The following is a 268-amino-acid chain: Phosphatidylglycerol--prolipoprotein diacylglyceryl transferase (268 aa).

A run of 4 helical transmembrane segments spans residues 23 to 43 (WYALAYLAGFVLGWRYCLALA), 58 to 78 (FLTWAVVGVILGGRIGYVLFY), 96 to 116 (GGMSFHGGLIGVLGAILLFCW), and 119 to 139 (GLSPLAFGDLIAAAAPIGLFF). R141 is a binding site for a 1,2-diacyl-sn-glycero-3-phospho-(1'-sn-glycerol). 3 helical membrane-spanning segments follow: residues 181–201 (SFLEGAVLFVLLAILVRMPAV), 206–226 (GMTAGIFFIGYGLSRIIAEFF), and 238–258 (AGATMGQLLSVPMVLFGVWLV).

This sequence belongs to the Lgt family.

It localises to the cell inner membrane. It catalyses the reaction L-cysteinyl-[prolipoprotein] + a 1,2-diacyl-sn-glycero-3-phospho-(1'-sn-glycerol) = an S-1,2-diacyl-sn-glyceryl-L-cysteinyl-[prolipoprotein] + sn-glycerol 1-phosphate + H(+). It functions in the pathway protein modification; lipoprotein biosynthesis (diacylglyceryl transfer). Functionally, catalyzes the transfer of the diacylglyceryl group from phosphatidylglycerol to the sulfhydryl group of the N-terminal cysteine of a prolipoprotein, the first step in the formation of mature lipoproteins. The chain is Phosphatidylglycerol--prolipoprotein diacylglyceryl transferase from Azospirillum brasilense.